The following is a 400-amino-acid chain: MNFLLCIFKGVYVIKLIQRFFKLESAGGILLLFSAVVAMLLANSPLSNQYNDFLNLPVSLQIGSFSINKTLIHWINDGFMAVFFVLVGMEVKKELFEGALSTYQQAIFPAIAAIGGMVIPAVVYWFIAKQDPSLANGWAIPMATDIAFALGIMALLSKQVPLPLKIFLLALAIIDDLGAIVVIALFFSHGLSVQALIFSAVAIIALILLNRFKVSALCAYMVVGAILWASVLKSGVHATLAGVIIGFSIPLKGKKGERPLDDFEHILASWSSFVILPLFAFANAGVSFAGIDVNMISSPLLLAIASGLIIGKPVGIFGFSYISVKLGLAKLPDGINFKQIFAVAVLCGIGFTMSMFLASLAFDANAGESVNTLSRLGILFGSTVSAILGYLFLKQTTKLS.

Transmembrane regions (helical) follow at residues 26 to 46, 71 to 91, 107 to 127, 137 to 157, 166 to 186, 189 to 209, 212 to 232, 233 to 253, 273 to 293, 299 to 319, 340 to 360, and 373 to 393; these read AGGI…NSPL, LIHW…GMEV, IFPA…YWFI, GWAI…ALLS, IFLL…IALF, HGLS…LILL, FKVS…ASVL, KSGV…PLKG, FVIL…GIDV, PLLL…IFGF, IFAV…LASL, and LSRL…YLFL.

The protein belongs to the NhaA Na(+)/H(+) (TC 2.A.33) antiporter family.

It is found in the cell inner membrane. The enzyme catalyses Na(+)(in) + 2 H(+)(out) = Na(+)(out) + 2 H(+)(in). In terms of biological role, na(+)/H(+) antiporter that extrudes sodium in exchange for external protons. The polypeptide is Na(+)/H(+) antiporter NhaA (Haemophilus influenzae (strain PittEE)).